The primary structure comprises 361 residues: Lipoyl synthase 1, chloroplastic (361 aa).

Cysteine 87, cysteine 92, cysteine 98, cysteine 124, cysteine 128, cysteine 131, and serine 339 together coordinate [4Fe-4S] cluster. The Radical SAM core domain maps to 107–328 (GEGDGIATAT…KEYGESVGFR (222 aa)).

This sequence belongs to the radical SAM superfamily. Lipoyl synthase family. [4Fe-4S] cluster serves as cofactor.

Its subcellular location is the plastid. The protein localises to the chloroplast. The catalysed reaction is [[Fe-S] cluster scaffold protein carrying a second [4Fe-4S](2+) cluster] + N(6)-octanoyl-L-lysyl-[protein] + 2 oxidized [2Fe-2S]-[ferredoxin] + 2 S-adenosyl-L-methionine + 4 H(+) = [[Fe-S] cluster scaffold protein] + N(6)-[(R)-dihydrolipoyl]-L-lysyl-[protein] + 4 Fe(3+) + 2 hydrogen sulfide + 2 5'-deoxyadenosine + 2 L-methionine + 2 reduced [2Fe-2S]-[ferredoxin]. The protein operates within protein modification; protein lipoylation via endogenous pathway; protein N(6)-(lipoyl)lysine from octanoyl-[acyl-carrier-protein]: step 2/2. Functionally, catalyzes the radical-mediated insertion of two sulfur atoms into the C-6 and C-8 positions of the octanoyl moiety bound to the lipoyl domains of lipoate-dependent enzymes, thereby converting the octanoylated domains into lipoylated derivatives. This Zea mays (Maize) protein is Lipoyl synthase 1, chloroplastic.